The following is a 183-amino-acid chain: Protein Syd (183 aa).

It belongs to the Syd family.

The protein localises to the cell inner membrane. Interacts with the SecY protein in vivo. May bind preferentially to an uncomplexed state of SecY, thus functioning either as a chelating agent for excess SecY in the cell or as a regulatory factor that negatively controls the translocase function. This Yersinia pseudotuberculosis serotype O:1b (strain IP 31758) protein is Protein Syd.